A 498-amino-acid chain; its full sequence is ATP synthase subunit beta, chloroplastic (498 aa).

An ATP-binding site is contributed by 172–179 (GGAGVGKT).

It belongs to the ATPase alpha/beta chains family. F-type ATPases have 2 components, CF(1) - the catalytic core - and CF(0) - the membrane proton channel. CF(1) has five subunits: alpha(3), beta(3), gamma(1), delta(1), epsilon(1). CF(0) has four main subunits: a(1), b(1), b'(1) and c(9-12).

Its subcellular location is the plastid. The protein resides in the chloroplast thylakoid membrane. The catalysed reaction is ATP + H2O + 4 H(+)(in) = ADP + phosphate + 5 H(+)(out). Its function is as follows. Produces ATP from ADP in the presence of a proton gradient across the membrane. The catalytic sites are hosted primarily by the beta subunits. The polypeptide is ATP synthase subunit beta, chloroplastic (Lemna minor (Common duckweed)).